The primary structure comprises 747 residues: Histone-lysine N-methyltransferase EZH1 (747 aa).

Residues 188-231 (DEEEEGHNDTSDGKQDDSKEDLPVTRKRKRHAIEGNKKSSKKQF) form a disordered region. Over residues 194–211 (HNDTSDGKQDDSKEDLPV) the composition is skewed to basic and acidic residues. Lys327 is covalently cross-linked (Glycyl lysine isopeptide (Lys-Gly) (interchain with G-Cter in SUMO2)). Positions 378–421 (SAVAETKEGDSDRDTGNDWASSSSEANSRCQTPTKQKASPAPPQ) are disordered. Positions 382–393 (ETKEGDSDRDTG) are enriched in basic and acidic residues. Residues 395–414 (DWASSSSEANSRCQTPTKQK) show a composition bias toward polar residues. Positions 491-496 (QKKKRK) match the Nuclear localization signal motif. In terms of domain architecture, CXC spans 504–606 (CRKIQLKKDN…CKVVSCKNCS (103 aa)). The SET domain occupies 613–728 (KHLLLAPSDV…AGEELFLDYR (116 aa)).

The protein belongs to the class V-like SAM-binding methyltransferase superfamily. Histone-lysine methyltransferase family. EZ subfamily. As to quaternary structure, component of the PRC2/EED-EZH1 complex, which includes EED, EZH1, SUZ12, RBBP4 and AEBP2. The PRC2/EED-EZH1 is less abundant than the PRC2/EED-EZH2 complex, has weak methyltransferase activity and compacts chromatin in the absence of the methyltransferase cofactor S-adenosyl-L-methionine (SAM). Interacts with EZHIP; the interaction blocks EZH1 methyltransferase activity.

Its subcellular location is the nucleus. It catalyses the reaction L-lysyl(27)-[histone H3] + 3 S-adenosyl-L-methionine = N(6),N(6),N(6)-trimethyl-L-lysyl(27)-[histone H3] + 3 S-adenosyl-L-homocysteine + 3 H(+). In terms of biological role, polycomb group (PcG) protein. Catalytic subunit of the PRC2/EED-EZH1 complex, which methylates 'Lys-27' of histone H3, leading to transcriptional repression of the affected target gene. Able to mono-, di- and trimethylate 'Lys-27' of histone H3 to form H3K27me1, H3K27me2 and H3K27me3, respectively. Required for embryonic stem cell derivation and self-renewal, suggesting that it is involved in safeguarding embryonic stem cell identity. Compared to EZH2-containing complexes, it is less abundant in embryonic stem cells, has weak methyltransferase activity and plays a less critical role in forming H3K27me3, which is required for embryonic stem cell identity and proper differentiation. In Pongo abelii (Sumatran orangutan), this protein is Histone-lysine N-methyltransferase EZH1 (EZH1).